Reading from the N-terminus, the 268-residue chain is Small ribosomal subunit protein uS2 (268 aa).

This sequence belongs to the universal ribosomal protein uS2 family.

This Coprothermobacter proteolyticus (strain ATCC 35245 / DSM 5265 / OCM 4 / BT) protein is Small ribosomal subunit protein uS2.